The sequence spans 233 residues: 5'-methylthioadenosine/S-adenosylhomocysteine nucleosidase (233 aa).

The active-site Proton acceptor is E12. Residues G78, I156, and 177 to 178 (ME) each bind substrate. Residue D201 is the Proton donor of the active site.

Belongs to the PNP/UDP phosphorylase family. MtnN subfamily.

The catalysed reaction is S-adenosyl-L-homocysteine + H2O = S-(5-deoxy-D-ribos-5-yl)-L-homocysteine + adenine. The enzyme catalyses S-methyl-5'-thioadenosine + H2O = 5-(methylsulfanyl)-D-ribose + adenine. It catalyses the reaction 5'-deoxyadenosine + H2O = 5-deoxy-D-ribose + adenine. It functions in the pathway amino-acid biosynthesis; L-methionine biosynthesis via salvage pathway; S-methyl-5-thio-alpha-D-ribose 1-phosphate from S-methyl-5'-thioadenosine (hydrolase route): step 1/2. In terms of biological role, catalyzes the irreversible cleavage of the glycosidic bond in both 5'-methylthioadenosine (MTA) and S-adenosylhomocysteine (SAH/AdoHcy) to adenine and the corresponding thioribose, 5'-methylthioribose and S-ribosylhomocysteine, respectively. Also cleaves 5'-deoxyadenosine, a toxic by-product of radical S-adenosylmethionine (SAM) enzymes, into 5-deoxyribose and adenine. This chain is 5'-methylthioadenosine/S-adenosylhomocysteine nucleosidase, found in Listeria monocytogenes serotype 4b (strain F2365).